Reading from the N-terminus, the 406-residue chain is Argininosuccinate synthase (406 aa).

ATP-binding positions include 11–19 (AYSGGLDTS) and Ala-38. L-citrulline-binding residues include Tyr-91 and Ser-96. Gly-121 is a binding site for ATP. The L-aspartate site is built by Thr-123, Asn-127, and Asp-128. Residue Asn-127 participates in L-citrulline binding. The L-citrulline site is built by Arg-131, Ser-181, Ser-190, Glu-266, and Tyr-278.

Belongs to the argininosuccinate synthase family. Type 1 subfamily. In terms of assembly, homotetramer.

Its subcellular location is the cytoplasm. It carries out the reaction L-citrulline + L-aspartate + ATP = 2-(N(omega)-L-arginino)succinate + AMP + diphosphate + H(+). It participates in amino-acid biosynthesis; L-arginine biosynthesis; L-arginine from L-ornithine and carbamoyl phosphate: step 2/3. This chain is Argininosuccinate synthase, found in Campylobacter curvus (strain 525.92).